We begin with the raw amino-acid sequence, 566 residues long: Phenylalanine--tRNA ligase beta subunit (566 aa).

Residues 287 to 362 (YFQEEVEFNV…IGEGLSSFNP (76 aa)) enclose the B5 domain. Mg(2+) is bound by residues Asp-340, Asp-346, Glu-349, and Asp-350.

It belongs to the phenylalanyl-tRNA synthetase beta subunit family. Type 2 subfamily. As to quaternary structure, tetramer of two alpha and two beta subunits. Requires Mg(2+) as cofactor.

The protein localises to the cytoplasm. The catalysed reaction is tRNA(Phe) + L-phenylalanine + ATP = L-phenylalanyl-tRNA(Phe) + AMP + diphosphate + H(+). This is Phenylalanine--tRNA ligase beta subunit from Borreliella burgdorferi (strain ATCC 35210 / DSM 4680 / CIP 102532 / B31) (Borrelia burgdorferi).